A 213-amino-acid chain; its full sequence is Uridine kinase (213 aa).

An ATP-binding site is contributed by 14–21; that stretch reads GASASGKS.

This sequence belongs to the uridine kinase family.

Its subcellular location is the cytoplasm. It carries out the reaction uridine + ATP = UMP + ADP + H(+). The catalysed reaction is cytidine + ATP = CMP + ADP + H(+). It functions in the pathway pyrimidine metabolism; CTP biosynthesis via salvage pathway; CTP from cytidine: step 1/3. It participates in pyrimidine metabolism; UMP biosynthesis via salvage pathway; UMP from uridine: step 1/1. In Vibrio parahaemolyticus serotype O3:K6 (strain RIMD 2210633), this protein is Uridine kinase.